The chain runs to 340 residues: Major histocompatibility complex class I-related gene protein (340 aa).

An N-terminal signal peptide occupies residues 1–22; the sequence is MGELMAFLLPLIIVLMVKHSNS. Positions 23–109 are alpha-1; that stretch reads RTHSLRYFRL…KRLQRHYNHS (87 aa). The tract at residues 23–201 is antigen-binding cleft; sequence RTHSLRYFRL…EYGKDTLQRT (179 aa). Topologically, residues 23–302 are extracellular; sequence RTHSLRYFRL…QESEAIPLVM (280 aa). The 8-(9H-purin-6-yl)-2-oxa-8-azabicyclo[3.3.1]nona-3,6-diene-4,6-dicarbaldehyde site is built by Tyr29 and Arg31. 5-(2-oxoethylideneamino)-6-(D-ribitylamino)uracil is bound by residues Arg31, Ser46, and Lys65. Residues Arg31, Ser46, and Lys65 each coordinate 5-(2-oxopropylideneamino)-6-(D-ribitylamino)uracil. 7-hydroxy-6-methyl-8-(1-D-ribityl)lumazine-binding residues include Arg31, Ser46, and Lys65. Residues Lys65 and His80 each coordinate 8-(9H-purin-6-yl)-2-oxa-8-azabicyclo[3.3.1]nona-3,6-diene-4,6-dicarbaldehyde. A 2-amino-4-oxopteridine-6-carbaldehyde-binding site is contributed by Lys65. Lys65 is a binding site for pyridoxal. A glycan (N-linked (GlcNAc...) asparagine) is linked at Asn107. Residues 110 to 201 form an alpha-2 region; sequence GSHTYQRMIG…EYGKDTLQRT (92 aa). Arg116 serves as a coordination point for 8-(9H-purin-6-yl)-2-oxa-8-azabicyclo[3.3.1]nona-3,6-diene-4,6-dicarbaldehyde. Arg116, Tyr174, and Gln175 together coordinate 5-(2-oxoethylideneamino)-6-(D-ribitylamino)uracil. The 5-(2-oxopropylideneamino)-6-(D-ribitylamino)uracil site is built by Arg116, Tyr174, and Gln175. Positions 116, 174, and 175 each coordinate 7-hydroxy-6-methyl-8-(1-D-ribityl)lumazine. Cystine bridges form between Cys120/Cys183 and Cys222/Cys278. The interval 202–293 is alpha-3; sequence EPPLVRVNRK…GVHMVLQVPQ (92 aa). The Ig-like C1-type domain maps to 203 to 282; sequence PPLVRVNRKE…SNLYSCHVEH (80 aa). The tract at residues 294 to 302 is connecting peptide; sequence ESEAIPLVM. Residues 303 to 323 form a helical membrane-spanning segment; that stretch reads KAVSGSIVFVIVLTGVGVLVW. The Cytoplasmic portion of the chain corresponds to 324–340; sequence RRRPREQNGAVYLPTPD.

The protein belongs to the MHC class I family. Heterotrimer that consists of MR1, B2M and metabolite antigen. Major classes of metabolite ligands presented by MR1 include riboflavin-related antigens, pyrimidines and ribityl lumazines, nucleobase adducts and folate derivatives. Forms reversible covalent Schiff base complexes with microbial pyrimidine-based metabolite, which serves as a molecular switch triggering complete folding, stable association with B2M and translocation of the ternary complex from endoplasmic reticulum to the plasma membrane. Alternatively, forms non-Schiff base complexes with ribityl lumazines. On antigen-presenting cells, the ternary complex interacts with TCR on MR1-restricted T cells. Interacts with TAPBP and TAPBPL chaperones in the endoplasmic reticulum. TAPBP associated or not with MHC class I peptide loading complex binds ligand-free MR1 or MR1-B2M complex, providing for stable MR1 pools ready for metabolite antigen processing. TAPBPL interacts with MR1 in a ligand-independent way; this interaction may stabilize MR1 pool and facilitate ligand loading and dissociation. Structurally, MR1-B2M heterodimer adopts a topology similar to classical MHC class I molecules, with alpha-1 and alpha-2 domains of MR1 forming the antigen-binding cleft composed of two alpha-helices resting on a floor of 7-stranded anti-parallel beta-pleated sheet. MR1-B2M heterodimer (via alpha-helices) interacts with TCR (via CDR domains). In terms of processing, N-glycosylated.

It is found in the cell membrane. It localises to the endoplasmic reticulum membrane. Its subcellular location is the golgi apparatus membrane. The protein localises to the early endosome membrane. The protein resides in the late endosome membrane. In terms of biological role, antigen-presenting molecule specialized in displaying microbial pyrimidine-based metabolites to alpha-beta T cell receptors (TCR) on innate-type mucosal-associated invariant T (MAIT) cells. In complex with B2M preferentially presents riboflavin-derived metabolites to semi-invariant TCRs on MAIT cells, guiding immune surveillance of the microbial metabolome at mucosal epithelial barriers. Signature pyrimidine-based microbial antigens are generated via non-enzymatic condensation of metabolite intermediates of the riboflavin pathway with by-products arising from other metabolic pathways such as glycolysis. Typical potent antigenic metabolites are 5-(2-oxoethylideneamino)-6-D-ribitylaminouracil (5-OE-RU) and 5-(2-oxopropylideneamino)-6-D-ribitylaminouracil (5-OP-RU), products of condensation of 5-amino-6-D-ribityaminouracil (5-A-RU) with glyoxal or methylglyoxal by-products, respectively. May present microbial antigens to various MAIT cell subsets, providing for unique recognition of diverse microbes, including pathogens that do not synthesize riboflavin. Upon antigen recognition, elicits rapid innate-type MAIT cell activation to eliminate pathogenic microbes by directly killing infected cells. During T cell development, drives thymic selection and post-thymic terminal differentiation of MAIT cells in a process dependent on commensal microflora. Acts as an immune sensor of cancer cell metabolome. May present a tumor-specific or -associated metabolite essential for cancer cell survival to a pan-cancer TCR on a non-MAIT CD8-positive T cell clone, triggering T cell-mediated killing of a wide range of cancer cell types. May present tumor-enriched pyridoxal and pyridoxal 5'-phosphate antigens, enabling preferential recognition of cancer cells. Presents nucleobase carbonyl adducts generated during oxidative stress. Captures M3Ade, a nucleobase adduct composed of one adenine modified by a malondialdehyde trimer, for recognition by MR1-restricted T cell clones expressing a polyclonal TCR repertoire. The polypeptide is Major histocompatibility complex class I-related gene protein (Pongo pygmaeus (Bornean orangutan)).